We begin with the raw amino-acid sequence, 321 residues long: Ferredoxin--NADP reductase (321 aa).

E33, Q41, Y46, V86, L119, D277, and S318 together coordinate FAD.

This sequence belongs to the ferredoxin--NADP reductase type 2 family. In terms of assembly, homodimer. The cofactor is FAD.

The enzyme catalyses 2 reduced [2Fe-2S]-[ferredoxin] + NADP(+) + H(+) = 2 oxidized [2Fe-2S]-[ferredoxin] + NADPH. This Lactococcus lactis subsp. lactis (strain IL1403) (Streptococcus lactis) protein is Ferredoxin--NADP reductase.